We begin with the raw amino-acid sequence, 168 residues long: Mitochondrial import inner membrane translocase subunit TIM14 (168 aa).

The segment covering 1–12 has biased composition (polar residues); the sequence is MSSQSNTGNSIE. The disordered stretch occupies residues 1–29; it reads MSSQSNTGNSIEAPQLPIPGQTNGSANVT. Residues 1 to 65 lie on the Mitochondrial intermembrane side of the membrane; that stretch reads MSSQSNTGNS…QALNYMGEHP (65 aa). Residues 66-83 form a helical membrane-spanning segment; it reads VITGFGAFLTLYFTAGAY. The Mitochondrial matrix portion of the chain corresponds to 84 to 168; sequence KSISKGLNGG…DFLEKRGISK (85 aa). A J domain is found at 112-168; that stretch reads EALQILNLTENTLTKKKLKEVHRKIMLANHPDKGGSPFLATKINEAKDFLEKRGISK.

The protein belongs to the TIM14 family. As to quaternary structure, homodimer and heterodimer with PAM16/TIM16. Homodimerization may not be relevant in vivo, while heterodimerization is essential for activity regulation of mtHSP70. Component of the PAM complex, at least composed of mtHsp70, MGE1, TIM44, PAM16, PAM17 and PAM18/TIM14. Interacts directly with mtHsp70. Interacts directly with TIM17 subunit of the TIM23 complex.

It localises to the mitochondrion inner membrane. In terms of biological role, essential component of the PAM complex, a complex required for the translocation of transit peptide-containing proteins from the inner membrane into the mitochondrial matrix in an ATP-dependent manner. In the complex, it is required to stimulate activity of mtHSP70 (SSC1). The chain is Mitochondrial import inner membrane translocase subunit TIM14 (PAM18) from Saccharomyces cerevisiae (strain ATCC 204508 / S288c) (Baker's yeast).